A 298-amino-acid polypeptide reads, in one-letter code: Mitochondrial glycine transporter (298 aa).

3 Solcar repeats span residues 5-84 (TKTR…MRTA), 105-189 (LTTY…AKEV), and 211-295 (TSTL…LIKL). The next 6 membrane-spanning stretches (helical) occupy residues 11–36 (LIGG…TRIQ), 59–85 (GTLP…RTAI), 111–136 (LISG…VRYE), 164–187 (GFGP…EKAK), 215–241 (VNST…KTRM), and 270–288 (GLSM…AWGI).

It belongs to the mitochondrial carrier (TC 2.A.29) family. SLC25A38 subfamily.

It localises to the mitochondrion inner membrane. The catalysed reaction is glycine(in) = glycine(out). Functionally, mitochondrial glycine transporter that imports glycine into the mitochondrial matrix. Plays an important role in providing glycine for the first enzymatic step in heme biosynthesis, the condensation of glycine with succinyl-CoA to produce 5-aminolevulinate (ALA) in the mitochondrial matrix. This Vanderwaltozyma polyspora (strain ATCC 22028 / DSM 70294 / BCRC 21397 / CBS 2163 / NBRC 10782 / NRRL Y-8283 / UCD 57-17) (Kluyveromyces polysporus) protein is Mitochondrial glycine transporter.